Here is a 97-residue protein sequence, read N- to C-terminus: Cysteine-rich and transmembrane domain-containing protein 1 (97 aa).

Pro residues predominate over residues 1–40 (MNQENPPPYPGPGPTAPYPPYPPQPMGPGPMGGPYPPPQG). The interval 1–61 (MNQENPPPYP…QGGPQEPPKT (61 aa)) is disordered. The segment covering 41 to 50 (YPYQGYPQYG) has biased composition (low complexity). The helical transmembrane segment at 74–91 (LGPSTCLTACWTALCCCC) threads the bilayer.

It belongs to the CYSTM1 family.

It is found in the membrane. This is Cysteine-rich and transmembrane domain-containing protein 1 (CYSTM1) from Homo sapiens (Human).